Consider the following 495-residue polypeptide: Protein FAM83F (495 aa).

Ala2 carries the N-acetylalanine modification. The DUF1669 stretch occupies residues 2-294 (AESQLSCLDE…LYAISEEVNL (293 aa)). Residue Ser4 is modified to Phosphoserine. Disordered regions lie at residues 341-362 (QQRE…GESA) and 384-495 (PISP…CVIS). Residues 447–458 (PAVPSSMASSPS) are compositionally biased toward low complexity. Ser477 is modified (phosphoserine).

Belongs to the FAM83 family. As to quaternary structure, directly interacts (via DUF1669) with CSNK1A1 and CSNK1A1L.

It is found in the cell membrane. The polypeptide is Protein FAM83F (Fam83f) (Mus musculus (Mouse)).